The sequence spans 383 residues: Putative glutamate--cysteine ligase 2-1 (383 aa).

This sequence belongs to the glutamate--cysteine ligase type 2 family. YbdK subfamily.

The catalysed reaction is L-cysteine + L-glutamate + ATP = gamma-L-glutamyl-L-cysteine + ADP + phosphate + H(+). Functionally, ATP-dependent carboxylate-amine ligase which exhibits weak glutamate--cysteine ligase activity. The sequence is that of Putative glutamate--cysteine ligase 2-1 from Arthrobacter sp. (strain FB24).